The primary structure comprises 140 residues: Large ribosomal subunit protein uL11 (140 aa).

This sequence belongs to the universal ribosomal protein uL11 family. As to quaternary structure, part of the ribosomal stalk of the 50S ribosomal subunit. Interacts with L10 and the large rRNA to form the base of the stalk. L10 forms an elongated spine to which L12 dimers bind in a sequential fashion forming a multimeric L10(L12)X complex. One or more lysine residues are methylated.

In terms of biological role, forms part of the ribosomal stalk which helps the ribosome interact with GTP-bound translation factors. In Oleidesulfovibrio alaskensis (strain ATCC BAA-1058 / DSM 17464 / G20) (Desulfovibrio alaskensis), this protein is Large ribosomal subunit protein uL11.